The sequence spans 144 residues: Large ribosomal subunit protein uL16 (144 aa).

Residues 1 to 16 (MLTPKRVKHRKQHRGK) show a composition bias toward basic residues. Positions 1–22 (MLTPKRVKHRKQHRGKMAGNAK) are disordered.

Belongs to the universal ribosomal protein uL16 family. As to quaternary structure, part of the 50S ribosomal subunit.

Its function is as follows. Binds 23S rRNA and is also seen to make contacts with the A and possibly P site tRNAs. The chain is Large ribosomal subunit protein uL16 from Brevibacillus brevis (strain 47 / JCM 6285 / NBRC 100599).